The chain runs to 426 residues: Serine--tRNA ligase (426 aa).

Residues 1-15 (MIDVKDLSENPDKFR) are compositionally biased toward basic and acidic residues. A disordered region spans residues 1-22 (MIDVKDLSENPDKFRASQRARG). 228–230 (TSE) provides a ligand contact to L-serine. ATP is bound by residues 259–261 (RRE) and Val275. Residue Glu282 coordinates L-serine. 346–349 (ELTS) contacts ATP. Position 386 (Thr386) interacts with L-serine.

Belongs to the class-II aminoacyl-tRNA synthetase family. Type-1 seryl-tRNA synthetase subfamily. Homodimer. The tRNA molecule binds across the dimer.

The protein localises to the cytoplasm. It catalyses the reaction tRNA(Ser) + L-serine + ATP = L-seryl-tRNA(Ser) + AMP + diphosphate + H(+). The catalysed reaction is tRNA(Sec) + L-serine + ATP = L-seryl-tRNA(Sec) + AMP + diphosphate + H(+). It participates in aminoacyl-tRNA biosynthesis; selenocysteinyl-tRNA(Sec) biosynthesis; L-seryl-tRNA(Sec) from L-serine and tRNA(Sec): step 1/1. Its function is as follows. Catalyzes the attachment of serine to tRNA(Ser). Is also able to aminoacylate tRNA(Sec) with serine, to form the misacylated tRNA L-seryl-tRNA(Sec), which will be further converted into selenocysteinyl-tRNA(Sec). The sequence is that of Serine--tRNA ligase from Pseudarthrobacter chlorophenolicus (strain ATCC 700700 / DSM 12829 / CIP 107037 / JCM 12360 / KCTC 9906 / NCIMB 13794 / A6) (Arthrobacter chlorophenolicus).